A 291-amino-acid polypeptide reads, in one-letter code: ATP synthase gamma chain (291 aa).

This sequence belongs to the ATPase gamma chain family. F-type ATPases have 2 components, CF(1) - the catalytic core - and CF(0) - the membrane proton channel. CF(1) has five subunits: alpha(3), beta(3), gamma(1), delta(1), epsilon(1). CF(0) has three main subunits: a, b and c.

The protein localises to the cell membrane. Produces ATP from ADP in the presence of a proton gradient across the membrane. The gamma chain is believed to be important in regulating ATPase activity and the flow of protons through the CF(0) complex. The protein is ATP synthase gamma chain of Streptococcus equi subsp. equi (strain 4047).